A 678-amino-acid chain; its full sequence is Probable N-methylproline demethylase (678 aa).

Residues Gly59, Gln102, Arg220, Lys299, and 321–322 contribute to the FMN site; that span reads TR. Positions 345, 351, and 363 each coordinate [4Fe-4S] cluster. Positions 396, 415, 423, 433, and 460 each coordinate FAD.

The protein in the N-terminal section; belongs to the NADH:flavin oxidoreductase/NADH oxidase family. The cofactor is FMN. It depends on FAD as a cofactor. [4Fe-4S] cluster serves as cofactor.

The catalysed reaction is N-methyl-L-proline + NAD(+) + H2O = L-proline + formaldehyde + NADH + H(+). The protein operates within amine and polyamine degradation; stachydrine degradation. Possible NADH-dependent oxidase, may function as a demethylase that converts N-methylproline to proline. The polypeptide is Probable N-methylproline demethylase (Rhizobium meliloti (strain 1021) (Ensifer meliloti)).